The chain runs to 505 residues: Chromosomal replication initiator protein DnaA (505 aa).

The segment at 1-90 (MSVELWQQCV…RRSSAPRAAP (90 aa)) is domain I, interacts with DnaA modulators. The interval 91-168 (NAPVSAAVAA…QVEGALKHTS (78 aa)) is domain II. The tract at residues 169-385 (YLNRTFTFDT…GALKRVIAHS (217 aa)) is domain III, AAA+ region. ATP-binding residues include Gly213, Gly215, Lys216, and Thr217. The tract at residues 386 to 505 (HFMGRDITIE…YKNLLRTLTT (120 aa)) is domain IV, binds dsDNA.

It belongs to the DnaA family. In terms of assembly, oligomerizes as a right-handed, spiral filament on DNA at oriC.

Its subcellular location is the cytoplasm. Its function is as follows. Plays an essential role in the initiation and regulation of chromosomal replication. ATP-DnaA binds to the origin of replication (oriC) to initiate formation of the DNA replication initiation complex once per cell cycle. Binds the DnaA box (a 9 base pair repeat at the origin) and separates the double-stranded (ds)DNA. Forms a right-handed helical filament on oriC DNA; dsDNA binds to the exterior of the filament while single-stranded (ss)DNA is stabiized in the filament's interior. The ATP-DnaA-oriC complex binds and stabilizes one strand of the AT-rich DNA unwinding element (DUE), permitting loading of DNA polymerase. After initiation quickly degrades to an ADP-DnaA complex that is not apt for DNA replication. Binds acidic phospholipids. This is Chromosomal replication initiator protein DnaA from Pseudomonas putida (strain ATCC 700007 / DSM 6899 / JCM 31910 / BCRC 17059 / LMG 24140 / F1).